Here is a 355-residue protein sequence, read N- to C-terminus: Phosphoserine aminotransferase (355 aa).

Arginine 41 is a binding site for L-glutamate. Pyridoxal 5'-phosphate is bound by residues 75 to 76 (AS), tryptophan 99, threonine 147, aspartate 166, and glutamine 189. Lysine 190 carries the post-translational modification N6-(pyridoxal phosphate)lysine. A pyridoxal 5'-phosphate-binding site is contributed by 231–232 (NT).

The protein belongs to the class-V pyridoxal-phosphate-dependent aminotransferase family. SerC subfamily. As to quaternary structure, homodimer. Pyridoxal 5'-phosphate is required as a cofactor.

It localises to the cytoplasm. It catalyses the reaction O-phospho-L-serine + 2-oxoglutarate = 3-phosphooxypyruvate + L-glutamate. It carries out the reaction 4-(phosphooxy)-L-threonine + 2-oxoglutarate = (R)-3-hydroxy-2-oxo-4-phosphooxybutanoate + L-glutamate. The protein operates within amino-acid biosynthesis; L-serine biosynthesis; L-serine from 3-phospho-D-glycerate: step 2/3. It participates in cofactor biosynthesis; pyridoxine 5'-phosphate biosynthesis; pyridoxine 5'-phosphate from D-erythrose 4-phosphate: step 3/5. In terms of biological role, catalyzes the reversible conversion of 3-phosphohydroxypyruvate to phosphoserine and of 3-hydroxy-2-oxo-4-phosphonooxybutanoate to phosphohydroxythreonine. This chain is Phosphoserine aminotransferase, found in Bacteroides thetaiotaomicron (strain ATCC 29148 / DSM 2079 / JCM 5827 / CCUG 10774 / NCTC 10582 / VPI-5482 / E50).